Here is a 93-residue protein sequence, read N- to C-terminus: Small ribosomal subunit protein uS19 (93 aa).

The protein belongs to the universal ribosomal protein uS19 family.

Functionally, protein S19 forms a complex with S13 that binds strongly to the 16S ribosomal RNA. This Frankia casuarinae (strain DSM 45818 / CECT 9043 / HFP020203 / CcI3) protein is Small ribosomal subunit protein uS19.